The chain runs to 1360 residues: TRAF2 and NCK-interacting protein kinase (1360 aa).

Residues 25-289 form the Protein kinase domain; sequence FELVELVGNG…TEQLMKHPFI (265 aa). ATP is bound by residues 31–39 and K54; that span reads VGNGTYGQV. The Proton acceptor role is filled by D153. T187 bears the Phosphothreonine mark. 3 disordered regions span residues 284–347, 398–440, and 539–589; these read MKHP…LPGE, QKEQ…RRRA, and ERSR…RPVD. A compositionally biased stretch (basic and acidic residues) spans 288 to 307; the sequence is FIRDQPNERQVRIQLKDHID. A mediates interaction with NEDD4 region spans residues 290 to 1047; it reads RDQPNERQVR…EIRKYKKRFN (758 aa). Over residues 317–335 the composition is skewed to acidic residues; it reads DETEYEYSGSEEEEEENDS. Phosphoserine is present on residues S324 and S326. Phosphoserine occurs at positions 560 and 570. Phosphothreonine is present on T581. Phosphoserine is present on residues S600, S608, S610, and S640. 4 disordered regions span residues 601–801, 814–878, 908–927, and 933–998; these read QGPA…KAID, LRIE…YNVG, TSGEKKRSGHSDSNGFAGHI, and VQQS…ESSA. The span at 652-669 shows a compositional bias: basic and acidic residues; the sequence is RIEKFDRSSWLRQEEDIP. Phosphoserine is present on residues S678, S680, S688, S701, S707, S720, S764, S766, and S769. Positions 720–755 are enriched in low complexity; that stretch reads SPLQRTSSGSSSSSSTPSSQPSSQGGSQPGSQAGSS. Composition is skewed to basic and acidic residues over residues 775–789 and 814–827; these read EPAKVKPEESRDITR and LRIEETNRPMKKVT. Residues 834 to 847 are compositionally biased toward acidic residues; the sequence is EESESSEEEEEDGE. A compositionally biased stretch (basic and acidic residues) spans 908 to 917; that stretch reads TSGEKKRSGH. Residue S959 is modified to Phosphoserine. The span at 987–996 shows a compositional bias: acidic residues; that stretch reads TDEDEEDEES. Positions 1047-1334 constitute a CNH domain; sequence NSEILCAALW…KFLCERNDKV (288 aa).

It belongs to the protein kinase superfamily. STE Ser/Thr protein kinase family. STE20 subfamily. Interacts (via the CNH domain) with RAP2A (GTP-bound form preferentially); the interaction is direct and required for the activation of TNIK by RAP2A. Interacts with NEDD4; recruits RAP2A to NEDD4. Interacts with TRAF2 and NCK. Interacts with TCF7L2/TCF4 and CTNNB1; the interaction is direct. Interacts with TANC1. Autophosphorylated. Autophosphorylation is activated by RAP2A and induces association to the cytoskeletal fraction. In terms of tissue distribution, expressed ubiquitously. Highest levels observed in heart, brain and skeletal muscle. Expressed in normal colonic epithelia and colorectal cancer tissues.

It is found in the nucleus. It localises to the cytoplasm. Its subcellular location is the recycling endosome. The protein resides in the cytoskeleton. It carries out the reaction L-seryl-[protein] + ATP = O-phospho-L-seryl-[protein] + ADP + H(+). It catalyses the reaction L-threonyl-[protein] + ATP = O-phospho-L-threonyl-[protein] + ADP + H(+). Serine/threonine kinase that acts as an essential activator of the Wnt signaling pathway. Recruited to promoters of Wnt target genes and required to activate their expression. May act by phosphorylating TCF4/TCF7L2. Appears to act upstream of the JUN N-terminal pathway. May play a role in the response to environmental stress. Part of a signaling complex composed of NEDD4, RAP2A and TNIK which regulates neuronal dendrite extension and arborization during development. More generally, it may play a role in cytoskeletal rearrangements and regulate cell spreading. Phosphorylates SMAD1 on Thr-322. Activator of the Hippo signaling pathway which plays a pivotal role in organ size control and tumor suppression by restricting proliferation and promoting apoptosis. MAP4Ks act in parallel to and are partially redundant with STK3/MST2 and STK4/MST2 in the phosphorylation and activation of LATS1/2, and establish MAP4Ks as components of the expanded Hippo pathway. The polypeptide is TRAF2 and NCK-interacting protein kinase (Homo sapiens (Human)).